We begin with the raw amino-acid sequence, 490 residues long: Tektin-3 (490 aa).

3 O-linked (GalNAc...) threonine glycosylation sites follow: threonine 7, threonine 9, and threonine 10. 6 N-linked (GlcNAc...) asparagine glycosylation sites follow: asparagine 41, asparagine 86, asparagine 103, asparagine 111, asparagine 276, and asparagine 344. A coiled-coil region spans residues 424–451 (VHEVDDTIQTLQQRLRDAEDTLQSLVHI).

The protein belongs to the tektin family. In terms of assembly, microtubule inner protein component of sperm flagellar doublet microtubules. Interacts with TEKT1, TEKT2, TEKT4 and TEKT5. Interacts with CCDC38. In terms of processing, N- and O-glycosylated. Post-translationally, may be proteolytically processed during the epididymal transit of spermatozoa. Ubiquitinated, leading to its degradation. Deubiquitinated by USP16, promoting its stability. In terms of tissue distribution, expressed in spermatozoa. Expressed in airway epithelial cells.

It is found in the cytoplasm. The protein localises to the cytoskeleton. Its subcellular location is the cilium axoneme. The protein resides in the flagellum axoneme. It localises to the cytoplasmic vesicle. It is found in the secretory vesicle. The protein localises to the acrosome outer membrane. Functionally, microtubule inner protein (MIP) part of the dynein-decorated doublet microtubules (DMTs) in cilia and flagellar axoneme. Forms filamentous polymers in the walls of ciliary and flagellar microtubules. Required for normal sperm mobility. The polypeptide is Tektin-3 (TEKT3) (Homo sapiens (Human)).